A 171-amino-acid polypeptide reads, in one-letter code: Adenine phosphoribosyltransferase (171 aa).

The protein belongs to the purine/pyrimidine phosphoribosyltransferase family. Homodimer.

The protein localises to the cytoplasm. It carries out the reaction AMP + diphosphate = 5-phospho-alpha-D-ribose 1-diphosphate + adenine. It participates in purine metabolism; AMP biosynthesis via salvage pathway; AMP from adenine: step 1/1. In terms of biological role, catalyzes a salvage reaction resulting in the formation of AMP, that is energically less costly than de novo synthesis. The sequence is that of Adenine phosphoribosyltransferase from Prochlorococcus marinus (strain MIT 9515).